The following is a 393-amino-acid chain: Cytochrome b (393 aa).

4 helical membrane-spanning segments follow: residues 32–52 (FGSLLGVCLIIQILTGVFLAM), 76–98 (WLIRYLHANTASFFFIFVYLHIG), 113–133 (LWSIGVIILVLMMAIAFLGYV), and 179–199 (FFSLHYLLPFVLAALAAMHLL). Heme b is bound by residues His82 and His96. Heme b-binding residues include His183 and His197. An a ubiquinone-binding site is contributed by His202. 4 consecutive transmembrane segments (helical) span residues 225 to 245 (FTFKDLVTIFVFLLALSLFVF), 289 to 309 (LIGVLAMFMSLLILLGMPILD), 321 to 341 (LMRFSFWTFVACFFILMFIGS), and 348 to 368 (YVEIGAAATAYYFAWFLVVVP).

It belongs to the cytochrome b family. Fungal cytochrome b-c1 complex contains 10 subunits; 3 respiratory subunits, 2 core proteins and 5 low-molecular weight proteins. Cytochrome b-c1 complex is a homodimer. The cofactor is heme b.

The protein localises to the mitochondrion inner membrane. Its function is as follows. Component of the ubiquinol-cytochrome c reductase complex (complex III or cytochrome b-c1 complex) that is part of the mitochondrial respiratory chain. The b-c1 complex mediates electron transfer from ubiquinol to cytochrome c. Contributes to the generation of a proton gradient across the mitochondrial membrane that is then used for ATP synthesis. The chain is Cytochrome b (COB) from Mycosarcoma maydis (Corn smut fungus).